The following is a 350-amino-acid chain: Small ribosomal subunit protein uS3 (350 aa).

The KH type-2 domain occupies I38–K106. Residues A211–E350 are disordered. Basic residues predominate over residues Q222 to P232. The segment covering N261 to E350 has biased composition (low complexity).

Belongs to the universal ribosomal protein uS3 family. As to quaternary structure, part of the 30S ribosomal subunit. Forms a tight complex with proteins S10 and S14.

Binds the lower part of the 30S subunit head. Binds mRNA in the 70S ribosome, positioning it for translation. This chain is Small ribosomal subunit protein uS3, found in Frankia alni (strain DSM 45986 / CECT 9034 / ACN14a).